The chain runs to 155 residues: Small ribosomal subunit protein uS7 (155 aa).

This sequence belongs to the universal ribosomal protein uS7 family. As to quaternary structure, part of the 30S ribosomal subunit. Contacts proteins S9 and S11.

Its function is as follows. One of the primary rRNA binding proteins, it binds directly to 16S rRNA where it nucleates assembly of the head domain of the 30S subunit. Is located at the subunit interface close to the decoding center, probably blocks exit of the E-site tRNA. This Chlorobium limicola (strain DSM 245 / NBRC 103803 / 6330) protein is Small ribosomal subunit protein uS7.